Consider the following 855-residue polypeptide: Envelope glycoprotein gp150 (855 aa).

At 1–784 (MAEGGFTHNQ…WIGKIPQYLK (784 aa)) the chain is on the extracellular side. N-linked (GlcNAc...) asparagine; by host glycans are attached at residues Asn-135, Asn-220, Asn-258, Asn-269, Asn-274, Asn-298, Asn-330, Asn-336, Asn-342, Asn-372, Asn-418, Asn-422, Asn-448, Asn-469, Asn-481, Asn-499, Asn-518, Asn-531, Asn-548, and Asn-551. The segment at 615 to 635 (IMLALATVLSMAGAGTGATAI) is fusion peptide. A coiled-coil region spans residues 642-692 (HQVLATHQQALEKITEALKINNLRLITLEHQVLVIGLRVEAIEKFLYTAFA). Residues 661–679 (INNLRLITLEHQVLVIGLR) are immunosuppression. Residues Asn-716, Asn-720, Asn-728, and Asn-736 are each glycosylated (N-linked (GlcNAc...) asparagine; by host). A coiled-coil region spans residues 735–771 (YNQTRDLQNKFYEIIMDIEQNNVQGKTGIQQLQKWEN). Residues 785–805 (GLLGSVLGIGLGILLLLICLP) traverse the membrane as a helical segment. Residues 806–855 (TLVDCIRNCTNKILGYTVIAMPEIDDEEVHLSVELRRNGRQCGISEKEEE) lie on the Cytoplasmic side of the membrane.

In terms of assembly, the mature envelope protein (Env) consists of a trimer of SU-TM heterodimers attached by noncovalent interactions or by a labile interchain disulfide bond. Specific enzymatic cleavages in vivo yield mature proteins. Envelope glycoproteins are synthesized as an inactive precursor that is N-glycosylated and processed likely by host cell furin or by a furin-like protease in the Golgi to yield the mature SU and TM proteins. The cleavage site between SU and TM requires the minimal sequence [KR]-X-[KR]-R.

Its subcellular location is the virion membrane. It localises to the host cell membrane. In terms of biological role, the surface protein (SU) attaches the virus to the host cell by binding to its receptor. This interaction triggers the refolding of the transmembrane protein (TM) and is thought to activate its fusogenic potential by unmasking its fusion peptide. Fusion occurs at the host cell plasma membrane. Functionally, the transmembrane protein (TM) acts as a class I viral fusion protein. Under the current model, the protein has at least 3 conformational states: pre-fusion native state, pre-hairpin intermediate state, and post-fusion hairpin state. During viral and target cell membrane fusion, the coiled coil regions (heptad repeats) assume a trimer-of-hairpins structure, positioning the fusion peptide in close proximity to the C-terminal region of the ectodomain. The formation of this structure appears to drive apposition and subsequent fusion of viral and target cell membranes. Membranes fusion leads to delivery of the nucleocapsid into the cytoplasm. The protein is Envelope glycoprotein gp150 (env) of Feline immunodeficiency virus (isolate TM2) (FIV).